Reading from the N-terminus, the 146-residue chain is Large ribosomal subunit protein uL15 (146 aa).

The interval 1-51 (MKLHELQPAAGSRKVRNRVGRGTSSGNGKTSGRGQKGQKARSGGGVRLGFE) is disordered. Gly residues-rich tracts occupy residues 23-35 (TSSGNGKTSGRGQ) and 42-51 (SGGGVRLGFE).

Belongs to the universal ribosomal protein uL15 family. In terms of assembly, part of the 50S ribosomal subunit.

Functionally, binds to the 23S rRNA. In Streptococcus sanguinis (strain SK36), this protein is Large ribosomal subunit protein uL15.